Consider the following 144-residue polypeptide: Gas vesicle protein I1 (144 aa).

The disordered stretch occupies residues 1–144; it reads MSDKQQQKHK…SPTEDEVNDE (144 aa). Composition is skewed to basic residues over residues 7–17 and 26–46; these read QKHKQKARQAR and KARR…TRNR. Over residues 75–94 the composition is skewed to polar residues; the sequence is MPPQKSNAENAVRNSHSTVP. Low complexity predominate over residues 122-136; it reads SEASAPSDESASGSP.

This sequence belongs to the gas vesicle GvpI family. GvpF to GvpM interact with each other in vitro, and may form multi-subunit complex(es). Interacts with GvpC1 and GvpO.

The protein localises to the gas vesicle. Proteins GvpF to GvpM might be involved in nucleating gas vesicle formation. A minor component of the gas vesicle. Gas vesicles are hollow, gas filled proteinaceous nanostructures found in several microbial planktonic microorganisms. They allow positioning of halobacteria at the optimal depth for growth in the poorly aerated, shallow brine pools of their habitat. Functionally, expression of a 9.5 kb p-vac DNA fragment containing 2 divergently transcribed regions (gvpD-gvpE-gvpF-gvpG-gvpH-gvpI-gvpJ-gvpK-gvpL-gvpM and gvpA-gvpC-gvpN-gvpO) allows H.volcanii to produce gas vesicles. A similar region restores gas vesicle production in H.halobium without the p-vac locus, but it still has the c-vac locus. The protein is Gas vesicle protein I1 (gvpI11) of Halobacterium salinarum (strain ATCC 700922 / JCM 11081 / NRC-1) (Halobacterium halobium).